A 1204-amino-acid polypeptide reads, in one-letter code: Integrator complex subunit 2 (1204 aa).

Residues 428–444 (FVSLSFCMLLAFSTLVS) traverse the membrane as a helical segment.

This sequence belongs to the Integrator subunit 2 family. In terms of assembly, component of the Integrator complex, composed of core subunits INTS1, INTS2, INTS3, INTS4, INTS5, INTS6, INTS7, INTS8, INTS9/RC74, INTS10, INTS11/CPSF3L, INTS12, INTS13, INTS14 and INTS15. The core complex associates with protein phosphatase 2A subunits PPP2CA and PPP2R1A, to form the Integrator-PP2A (INTAC) complex.

The protein localises to the nucleus. The protein resides in the nucleus membrane. Its subcellular location is the cytoplasm. Functionally, component of the integrator complex, a multiprotein complex that terminates RNA polymerase II (Pol II) transcription in the promoter-proximal region of genes. The integrator complex provides a quality checkpoint during transcription elongation by driving premature transcription termination of transcripts that are unfavorably configured for transcriptional elongation: the complex terminates transcription by (1) catalyzing dephosphorylation of the C-terminal domain (CTD) of Pol II subunit POLR2A/RPB1 and SUPT5H/SPT5, (2) degrading the exiting nascent RNA transcript via endonuclease activity and (3) promoting the release of Pol II from bound DNA. The integrator complex is also involved in terminating the synthesis of non-coding Pol II transcripts, such as enhancer RNAs (eRNAs), small nuclear RNAs (snRNAs), telomerase RNAs and long non-coding RNAs (lncRNAs). Mediates recruitment of cytoplasmic dynein to the nuclear envelope, probably as component of the integrator complex. The protein is Integrator complex subunit 2 of Homo sapiens (Human).